Reading from the N-terminus, the 299-residue chain is Palmitoyltransferase ZDHHC3 (299 aa).

Over 1-47 (MMLIPTHHFRNIERKPEYLQPEKCVPPPYPGPVGTMWFIRDGCGIAC) the chain is Cytoplasmic. Tyr-18 carries the phosphotyrosine modification. A helical transmembrane segment spans residues 48–68 (AIVTWFLVLYAEFVVLFVMLI). Residues 69–72 (PSRD) lie on the Extracellular side of the membrane. The chain crosses the membrane as a helical span at residues 73-93 (YVYSIINGIVFNLLAFLALAS). Residues 94–171 (HCRAMLTDPG…NCVGENNQKY (78 aa)) lie on the Cytoplasmic side of the membrane. Positions 127–177 (YKCPKCCSIKPDRAHHCSVCKRCIRKMDHHCPWVNNCVGENNQKYFVLFTM) constitute a DHHC domain. The S-palmitoyl cysteine moiety is linked to residue Cys-146. Residue Cys-157 is the S-palmitoyl cysteine intermediate of the active site. The chain crosses the membrane as a helical span at residues 172–192 (FVLFTMYIALISLHALIMVGF). Residues 193–214 (HFLHCFEEDWTKCSSFSPPTTV) lie on the Extracellular side of the membrane. The chain crosses the membrane as a helical span at residues 215–235 (ILLILLCFEGLLFLIFTSVMF). Residues 236 to 299 (GTQVHSICTD…GKADPYQYVV (64 aa)) lie on the Cytoplasmic side of the membrane.

Belongs to the DHHC palmitoyltransferase family. Monomer. Homooligomers. The monomeric form has a higher catalytic activity. Forms heterooligomers with ZDHHC7. Interacts with TNFRSF10A. Post-translationally, autopalmitoylated. In terms of processing, phosphorylation by FGFR1 and SRC probably regulates the palmitoyltransferase activity. In terms of tissue distribution, widely expressed with significant expression in heart, lung, liver, skeletal muscle, kidney, testis, thymus, small intestine and leukocyte.

Its subcellular location is the golgi apparatus membrane. It catalyses the reaction L-cysteinyl-[protein] + hexadecanoyl-CoA = S-hexadecanoyl-L-cysteinyl-[protein] + CoA. It carries out the reaction L-cysteinyl-[protein] + tetradecanoyl-CoA = S-tetradecanoyl-L-cysteinyl-[protein] + CoA. The enzyme catalyses L-cysteinyl-[protein] + octadecanoyl-CoA = S-octadecanoyl-L-cysteinyl-[protein] + CoA. Functionally, golgi-localized palmitoyltransferase that catalyzes the addition of palmitate onto various protein substrates. Has no stringent fatty acid selectivity and in addition to palmitate can also transfer onto target proteins myristate from tetradecanoyl-CoA and stearate from octadecanoyl-CoA. Plays an important role in G protein-coupled receptor signaling pathways involving GNAQ and potentially other heterotrimeric G proteins by regulating their dynamic association with the plasma membrane. Palmitoylates ITGA6 and ITGB4, thereby regulating the alpha-6/beta-4 integrin localization, expression and function in cell adhesion to laminin. Plays a role in the TRAIL-activated apoptotic signaling pathway most probably through the palmitoylation and localization to the plasma membrane of TNFRSF10A. In the brain, by palmitoylating the gamma subunit GABRG2 of GABA(A) receptors and regulating their postsynaptic accumulation, plays a role in synaptic GABAergic inhibitory function and GABAergic innervation. Palmitoylates the neuronal protein GAP43 which is also involved in the formation of GABAergic synapses. Palmitoylates NCDN thereby regulating its association with endosome membranes. Probably palmitoylates PRCD and is involved in its proper localization within the photoreceptor. Could mediate the palmitoylation of NCAM1 and regulate neurite outgrowth. Could palmitoylate DNAJC5 and regulate its localization to Golgi membranes. Also constitutively palmitoylates DLG4. May also palmitoylate SNAP25. Could palmitoylate the glutamate receptors GRIA1 and GRIA2 but this has not been confirmed in vivo. Could also palmitoylate the D(2) dopamine receptor DRD2. May also palmitoylate LAMTOR1, promoting its localization to lysosomal membranes. Palmitoylates the Toll-like receptor 9/TLR9 in the Golgi and thereby regulates TLR9 trafficking to endosomes. May palmitoylate CALHM1 and CALHM3 subunits of gustatory voltage-gated ion channels and modulate channel gating and kinetics. Its function is as follows. May also function as a calcium transporter. This Homo sapiens (Human) protein is Palmitoyltransferase ZDHHC3.